A 1433-amino-acid polypeptide reads, in one-letter code: Probable ATP-dependent RNA helicase spindle-E (1433 aa).

The segment at 76–98 is disordered; sequence NRTLDELDSDDEEENMQEQPSVR. Residues 81–91 are compositionally biased toward acidic residues; sequence ELDSDDEEENM. Positions 127 to 294 constitute a Helicase ATP-binding domain; sequence MKAIRENPVV…FATSSAFPPV (168 aa). Residue 140 to 147 participates in ATP binding; sequence GETGCGKT. Residues 240-243 carry the DEAH box motif; that stretch reads DEVH. The Helicase C-terminal domain occupies 354–526; it reads QSLQSYEEAK…NSVLKAKELE (173 aa). The Tudor domain maps to 937–1000; the sequence is ASAVTKGLQL…RLMPHELKRD (64 aa).

The protein belongs to the DEAD box helicase family. DEAH subfamily.

The protein localises to the cytoplasm. The catalysed reaction is ATP + H2O = ADP + phosphate + H(+). Functionally, probable ATP-binding RNA helicase which plays a central role during spermatogenesis and oogenesis by repressing transposable elements and preventing their mobilization, which is essential for the germline integrity. Acts via the piRNA metabolic process, which mediates the repression of transposable elements during meiosis by forming complexes composed of piRNAs and Piwi and govern the methylation and subsequent repression of transposons. Involved in the repression of LTR retrotransposon copia. Also involved in telomere regulation by repressing specialized telomeric retroelements HeT-A, TAHRE, and TART; Drosophila telomeres being maintained by transposition of specialized telomeric retroelements. Involved in telomeric trans-silencing, a repression mechanism by which a transposon or a transgene inserted in subtelomeric heterochromatin has the capacity to repress in trans in the female germline, a homologous transposon, or transgene located in euchromatin. Involved in the repression of testis-expressed Stellate genes by the homologous Su(Ste) repeats. Required for anteroposterior and dorsoventral axis formation during oogenesis. This is Probable ATP-dependent RNA helicase spindle-E (spn-E) from Drosophila virilis (Fruit fly).